Here is a 153-residue protein sequence, read N- to C-terminus: Large ribosomal subunit protein uL15 (153 aa).

The disordered stretch occupies residues 21–41; it reads RGIGSGKGKTGGRGIKGQKSR. Gly residues predominate over residues 23–35; the sequence is IGSGKGKTGGRGI.

It belongs to the universal ribosomal protein uL15 family. In terms of assembly, part of the 50S ribosomal subunit.

In terms of biological role, binds to the 23S rRNA. The protein is Large ribosomal subunit protein uL15 of Rickettsia africae (strain ESF-5).